A 191-amino-acid chain; its full sequence is NF-kappa-B inhibitor-interacting Ras-like protein 2 (191 aa).

Residues 1–191 (MGKSCKVVVC…KNKGSGSVDG (191 aa)) form a small GTPase-like region. Residue 11–18 (GQAAVGKT) participates in GTP binding. The Effector region motif lies at 35–43 (MIETQEDIY). GTP contacts are provided by residues 61–65 (DTRGL) and 120–123 (NKCD). The segment at 170–191 (QPQSKSAFPLSRKNKGSGSVDG) is disordered.

Belongs to the small GTPase superfamily. Ras family. KappaB-Ras subfamily.

It localises to the cytoplasm. In terms of biological role, atypical Ras-like protein that acts as a potent regulator of NF-kappa-B activity by preventing the degradation of NF-kappa-B inhibitor beta (NFKBIB) by most signals, explaining why NFKBIB is more resistant to degradation. This is NF-kappa-B inhibitor-interacting Ras-like protein 2 (NKIRAS2) from Gallus gallus (Chicken).